The sequence spans 95 residues: Aspartyl/glutamyl-tRNA(Asn/Gln) amidotransferase subunit C (95 aa).

This sequence belongs to the GatC family. In terms of assembly, heterotrimer of A, B and C subunits.

The catalysed reaction is L-glutamyl-tRNA(Gln) + L-glutamine + ATP + H2O = L-glutaminyl-tRNA(Gln) + L-glutamate + ADP + phosphate + H(+). The enzyme catalyses L-aspartyl-tRNA(Asn) + L-glutamine + ATP + H2O = L-asparaginyl-tRNA(Asn) + L-glutamate + ADP + phosphate + 2 H(+). In terms of biological role, allows the formation of correctly charged Asn-tRNA(Asn) or Gln-tRNA(Gln) through the transamidation of misacylated Asp-tRNA(Asn) or Glu-tRNA(Gln) in organisms which lack either or both of asparaginyl-tRNA or glutaminyl-tRNA synthetases. The reaction takes place in the presence of glutamine and ATP through an activated phospho-Asp-tRNA(Asn) or phospho-Glu-tRNA(Gln). This chain is Aspartyl/glutamyl-tRNA(Asn/Gln) amidotransferase subunit C, found in Acidithiobacillus ferrooxidans (strain ATCC 23270 / DSM 14882 / CIP 104768 / NCIMB 8455) (Ferrobacillus ferrooxidans (strain ATCC 23270)).